The sequence spans 184 residues: Helix-loop-helix protein ngn-1 (184 aa).

The segment at 1–55 (MYHHSPFYPHHLQTGEQDLDMERENDMDQNSKNSTQKPVKREKRRYRCRKRSPAT) is disordered. A compositionally biased stretch (polar residues) spans 28 to 37 (DQNSKNSTQK). Residues 38–52 (PVKREKRRYRCRKRS) are compositionally biased toward basic residues. A basic motif region spans residues 62–75 (VRRDKANARERRRM). The bHLH domain occupies 62-114 (VRRDKANARERRRMNSLNDALEHLRGILPALPDEPKMTKIETLRKAQEYIASL). The segment at 76–114 (NSLNDALEHLRGILPALPDEPKMTKIETLRKAQEYIASL) is helix-loop-helix motif. The segment at 164 to 184 (SNPPSQMYYHHHHQSPSFPHH) is disordered. Over residues 172–184 (YHHHHQSPSFPHH) the composition is skewed to basic residues.

As to quaternary structure, interacts with hlh-2; the interaction is direct.

It localises to the nucleus. In terms of biological role, acts as a transcriptional regulator. Regulates expression of various genes, including homeobox protein unc-42 and helix-loop-helix protein hlh-34. Required for embryonic viability, neuromuscular development, organization of the nerve ring and neuronal cell body location. Regulates AIY neuron axon morphology and cell fate. Plays a role in cell autonomously establishing a neuronal left-right asymmetry. Involved in regulating glial specification. The chain is Helix-loop-helix protein ngn-1 from Caenorhabditis elegans.